We begin with the raw amino-acid sequence, 173 residues long: Atrial gland and califin peptides (173 aa).

Residues 1-21 form the signal peptide; that stretch reads MKANTMFIILCLSLSTLCVSS. Residues 22–34 constitute a propeptide that is removed on maturation; it reads QSTSVHGKIFVPN. Residue Ile69 is modified to Isoleucine amide. The propeptide occupies 73–114; it reads AAGEMEQSEGQNPETKSHSWRKRSVLTPSLSSLGESLESGIS. Residues 75 to 94 are disordered; it reads GEMEQSEGQNPETKSHSWRK. Cys141 and Cys172 form a disulfide bridge. At Leu152 the chain carries Leucine amide.

The protein belongs to the molluscan ELH family. Califin A consists of a 36-residue large subunit bound by a single disulfide bond to a 18-residue small subunit.

Its subcellular location is the secreted. The atrial gland peptide A and peptide B precursors are the source of the 2 peptides that, upon release from this reproductive system gland, initiate the egg-laying process by exciting the bag cell neurons. These neurons, clustered in neural connectives near the abdominal ganglion, in turn release other peptides that act directly on the ganglion and also, via the circulating hemolymph, on many other organs to control the physiological processes of egg-laying. One of these other peptides is the egg-laying hormone. In terms of biological role, injected in sexually mature animals califin A excites LB and LC cells of the abdominal ganglion and causes egg-laying. This is Atrial gland and califin peptides from Aplysia californica (California sea hare).